A 720-amino-acid chain; its full sequence is Protein O-mannosyl-transferase 1 (720 aa).

The next 8 helical transmembrane spans lie at 7–27, 67–87, 105–125, 127–147, 150–170, 178–198, 201–221, and 239–259; these read PVSV…LALF, FGHM…NFVW, LIPA…VVEL, YSHF…SLIV, RFML…LSYL, SFFK…GIGV, MGMF…WQLI, and FLAL…IHLT. 3 consecutive MIR domains span residues 291–354, 365–422, and 426–486; these read PLDV…IKDP, PKPV…VDIV, and SEKE…VEEH. 4 helical membrane-spanning segments follow: residues 570–590, 609–629, 633–653, and 670–690; these read IVTW…FLTY, LVLA…PFFL, TLFL…IPIV, and AFGG…HSLS.

This sequence belongs to the glycosyltransferase 39 family. Widely expressed. Has particularly strong expression in testis, ovary, brain, liver and heart.

It localises to the endoplasmic reticulum membrane. The catalysed reaction is a di-trans,poly-cis-dolichyl beta-D-mannosyl phosphate + L-seryl-[protein] = 3-O-(alpha-D-mannosyl)-L-seryl-[protein] + a di-trans,poly-cis-dolichyl phosphate + H(+). It catalyses the reaction a di-trans,poly-cis-dolichyl beta-D-mannosyl phosphate + L-threonyl-[protein] = 3-O-(alpha-D-mannosyl)-L-threonyl-[protein] + a di-trans,poly-cis-dolichyl phosphate + H(+). The protein operates within protein modification; protein glycosylation. Transfers mannosyl residues to the hydroxyl group of serine or threonine residues. Coexpression of both POMT1 and POMT2 is necessary for enzyme activity, expression of either POMT1 or POMT2 alone is insufficient. This chain is Protein O-mannosyl-transferase 1, found in Danio rerio (Zebrafish).